A 285-amino-acid polypeptide reads, in one-letter code: Type II secretion system protein C (285 aa).

The Cytoplasmic segment spans residues 1 to 27 (MSKGIKMHNSVMRLTIPNKKIINYAPH). A helical transmembrane segment spans residues 28-46 (IVTSIILFFICQQLAQLTW). Residues 47–285 (KIILPVNFTD…NDIYLALRDE (239 aa)) lie on the Periplasmic side of the membrane.

Belongs to the GSP C family.

Its subcellular location is the cell inner membrane. Its function is as follows. Involved in a type II secretion system (T2SS, formerly general secretion pathway, GSP) for the export of proteins. Required for the translocation of pullulanase. The sequence is that of Type II secretion system protein C (pulC) from Klebsiella pneumoniae.